The sequence spans 86 residues: Large ribosomal subunit protein eL43 (86 aa).

Zn(2+)-binding residues include Cys38, Cys41, Cys56, and Cys59. The C4-type zinc-finger motif lies at 38–59; that stretch reads CPVCGRKAVRRISTGIWQCQKC.

It belongs to the eukaryotic ribosomal protein eL43 family. In terms of assembly, part of the 50S ribosomal subunit. Zn(2+) is required as a cofactor.

This chain is Large ribosomal subunit protein eL43, found in Thermococcus kodakarensis (strain ATCC BAA-918 / JCM 12380 / KOD1) (Pyrococcus kodakaraensis (strain KOD1)).